A 358-amino-acid polypeptide reads, in one-letter code: UDP-3-O-acylglucosamine N-acyltransferase (358 aa).

Catalysis depends on His252, which acts as the Proton acceptor.

It belongs to the transferase hexapeptide repeat family. LpxD subfamily. As to quaternary structure, homotrimer.

The catalysed reaction is a UDP-3-O-[(3R)-3-hydroxyacyl]-alpha-D-glucosamine + a (3R)-hydroxyacyl-[ACP] = a UDP-2-N,3-O-bis[(3R)-3-hydroxyacyl]-alpha-D-glucosamine + holo-[ACP] + H(+). It participates in bacterial outer membrane biogenesis; LPS lipid A biosynthesis. Its function is as follows. Catalyzes the N-acylation of UDP-3-O-acylglucosamine using 3-hydroxyacyl-ACP as the acyl donor. Is involved in the biosynthesis of lipid A, a phosphorylated glycolipid that anchors the lipopolysaccharide to the outer membrane of the cell. The polypeptide is UDP-3-O-acylglucosamine N-acyltransferase (Paraburkholderia phymatum (strain DSM 17167 / CIP 108236 / LMG 21445 / STM815) (Burkholderia phymatum)).